A 732-amino-acid chain; its full sequence is Catalase-peroxidase (732 aa).

Residues 97-220 constitute a cross-link (tryptophyl-tyrosyl-methioninium (Trp-Tyr) (with M-246)); the sequence is WHSAGTYRTS…LAAVQMGLIY (124 aa). His-98 acts as the Proton acceptor in catalysis. A cross-link (tryptophyl-tyrosyl-methioninium (Tyr-Met) (with W-97)) is located at residues 220–246; that stretch reads YVNPEGPDGNPDPVAAGRDIRETFARM. Residue His-261 participates in heme b binding.

The protein belongs to the peroxidase family. Peroxidase/catalase subfamily. Homodimer or homotetramer. The cofactor is heme b. Formation of the three residue Trp-Tyr-Met cross-link is important for the catalase, but not the peroxidase activity of the enzyme.

It catalyses the reaction H2O2 + AH2 = A + 2 H2O. The enzyme catalyses 2 H2O2 = O2 + 2 H2O. Its function is as follows. Bifunctional enzyme with both catalase and broad-spectrum peroxidase activity. In Pelodictyon phaeoclathratiforme (strain DSM 5477 / BU-1), this protein is Catalase-peroxidase.